Reading from the N-terminus, the 234-residue chain is Small ribosomal subunit protein uS3 (234 aa).

A KH type-2 domain is found at 39 to 107; that stretch reads VRDYLKKKLS…PVHVNIEEVR (69 aa). Residues 212–234 form a disordered region; sequence EQPAAAEQEKRGKKSGVKHAAAS.

Belongs to the universal ribosomal protein uS3 family. As to quaternary structure, part of the 30S ribosomal subunit. Forms a tight complex with proteins S10 and S14.

Functionally, binds the lower part of the 30S subunit head. Binds mRNA in the 70S ribosome, positioning it for translation. The polypeptide is Small ribosomal subunit protein uS3 (Thiobacillus denitrificans (strain ATCC 25259 / T1)).